The chain runs to 395 residues: Chalcone synthase (395 aa).

C164 is an active-site residue.

This sequence belongs to the thiolase-like superfamily. Chalcone/stilbene synthases family.

It carries out the reaction (E)-4-coumaroyl-CoA + 3 malonyl-CoA + 3 H(+) = 2',4,4',6'-tetrahydroxychalcone + 3 CO2 + 4 CoA. The protein operates within secondary metabolite biosynthesis; flavonoid biosynthesis. The primary product of this enzyme is 4,2',4',6'-tetrahydroxychalcone (also termed naringenin-chalcone or chalcone) which can under specific conditions spontaneously isomerize into naringenin. The sequence is that of Chalcone synthase (CHS) from Betula pendula (European white birch).